The chain runs to 576 residues: (E,E)-alpha-farnesene synthase (576 aa).

(2E,6E)-farnesyl diphosphate is bound by residues Arg289, Asp326, Asp330, Arg468, and Asn471. Mg(2+) contacts are provided by Asp326 and Asp330. The short motif at 326-330 is the DDXXD motif element; the sequence is DDVYD. Mg(2+) is bound by residues Asn471, Thr475, and Glu479. K(+) is bound by residues Asp484 and Ser487.

Belongs to the terpene synthase family. Tpsb subfamily. As to quaternary structure, monomer. Mg(2+) is required as a cofactor. Requires Mn(2+) as cofactor. The cofactor is K(+).

It localises to the cytoplasm. It catalyses the reaction (2E,6E)-farnesyl diphosphate = (3E,6E)-alpha-farnesene + diphosphate. Its function is as follows. Sesquiterpene synthase catalyzing the production of (E,E)-alpha-farnesene, the predominant terpene produced during storage of fruits. Produces all six isomers (E,E)-alpha-farnesene, (Z,E)-alpha-farnesene, (E,Z)-alpha-farnesene, (Z,Z)-alpha-farnesene, (E)-beta-farnesene and (Z)-beta-farnesene from a mix of isomeric forms of the farnesyl diphosphate precursor. Able to convert geranyl diphosphate to the monoterpenes (E)-beta-ocimene, linalool and beta-myrcene. Also has a prenyltransferase activity producing alpha-farnesene directly from geranyl diphosphate and isoprenyl diphosphate. In Malus domestica (Apple), this protein is (E,E)-alpha-farnesene synthase (AFS1).